The primary structure comprises 218 residues: Ubiquitin-conjugating enzyme E2-24 kDa (218 aa).

The UBC core domain occupies 3-148 (SSKRRIETDV…IKEYIDKYAT (146 aa)). Cys85 functions as the Glycyl thioester intermediate in the catalytic mechanism. The segment at 154–218 (QMFGGDNDSD…DDDYDEVANQ (65 aa)) is disordered. Composition is skewed to acidic residues over residues 160–183 (NDSD…EDMD) and 192–218 (DSVD…VANQ).

The protein belongs to the ubiquitin-conjugating enzyme family.

The protein localises to the cytoplasm. The catalysed reaction is S-ubiquitinyl-[E1 ubiquitin-activating enzyme]-L-cysteine + [E2 ubiquitin-conjugating enzyme]-L-cysteine = [E1 ubiquitin-activating enzyme]-L-cysteine + S-ubiquitinyl-[E2 ubiquitin-conjugating enzyme]-L-cysteine.. Its pathway is protein modification; protein ubiquitination. Functionally, catalyzes the covalent attachment of ubiquitin to other proteins. Required for the adaptation to the presence of glucose in the growth medium; mediates the degradation of enzymes involved in gluconeogenesis when cells are shifted to glucose-containing medium. Required for proteasome-dependent catabolite degradation of fructose-1,6-bisphosphatase (FBP1). The protein is Ubiquitin-conjugating enzyme E2-24 kDa (UBC8) of Saccharomyces cerevisiae (strain ATCC 204508 / S288c) (Baker's yeast).